Consider the following 375-residue polypeptide: FAD-dependent catabolic D-arginine dehydrogenase DauA (375 aa).

Residues A14, 32–33, 41–48, A171, and 331–336 contribute to the FAD site; these read ER, STGRSAAH, and GGYGIQ.

The protein belongs to the FAD-dependent glycerol-3-phosphate dehydrogenase family. In terms of assembly, monomer. Requires FAD as cofactor.

The enzyme catalyses D-arginine + A + H2O = 5-guanidino-2-oxopentanoate + AH2 + NH4(+). It carries out the reaction a D-alpha-amino acid + A + H2O = a 2-oxocarboxylate + AH2 + NH4(+). Its activity is regulated as follows. Inhibited by D-arginine and D-lysine at high concentration. Functionally, dauA is highly expressed within the cystic fibrosis (CF) lung, and it is required for virulence via the optimal production of hydrogen cyanide, pyocyanine, pyoverdine, rhamnolipid and alginate during biofilm formation. Involved in the catabolism of D-lysine and D-arginine. Under aerobic conditions, the arginine succinyltransferase (AST) and arginine transaminase (ATA) pathways are 2 major routes for L-arginine utilization as the sole source of carbon and nitrogen. The D-to-L racemization of arginine by DauA and DauB is necessary, before to be channeled into the AST and/or ATA pathways. DauA catalyzes the flavin-dependent oxidative deamination of D-arginine into 2-ketoarginine (2-KA) and ammonia. It also has dehydrogenase activity towards D-lysine, D-tyrosine, D-methionine, D-phenylalanine, D-ornithine, D-histidine and D-leucine as substrates. This is FAD-dependent catabolic D-arginine dehydrogenase DauA from Pseudomonas aeruginosa (strain ATCC 15692 / DSM 22644 / CIP 104116 / JCM 14847 / LMG 12228 / 1C / PRS 101 / PAO1).